Consider the following 167-residue polypeptide: Piercer of microtubule wall 1 protein (167 aa).

Residues 1 to 54 (MSEEKPQQSAEEPEPGEPKAKPAPEEPEPGEPKAKPAPEEPEPGEPKAKPAPEK) are disordered. A compositionally biased stretch (basic and acidic residues) spans 16–54 (GEPKAKPAPEEPEPGEPKAKPAPEEPEPGEPKAKPAPEK).

The protein belongs to the PIERCE1 family. In terms of assembly, microtubule inner protein component of sperm flagellar doublet microtubules. Interacts with CFAP53, ODAD1 and ODAD3; the interactions link the outer dynein arms docking complex (ODA-DC) to the internal microtubule inner proteins (MIP) in cilium axoneme. As to expression, expressed in brain, lung, kidney and testis.

The protein localises to the cytoplasm. Its subcellular location is the cytoskeleton. It is found in the cilium axoneme. It localises to the flagellum axoneme. Functionally, microtubule inner protein involved in the attachment of outer dynein arms (ODAs) to dynein-decorated doublet microtubules (DMTs) in cilia axoneme. Functions at the initial step of left-right asymmetry specification of the visceral organs. The protein is Piercer of microtubule wall 1 protein of Mus musculus (Mouse).